A 228-amino-acid polypeptide reads, in one-letter code: Ureidoacrylate amidohydrolase RutB (228 aa).

Aspartate 23 functions as the Proton acceptor in the catalytic mechanism. Lysine 132 is a catalytic residue. The active-site Nucleophile is the cysteine 165.

It belongs to the isochorismatase family. RutB subfamily.

It carries out the reaction (Z)-3-ureidoacrylate + H2O + H(+) = (Z)-3-aminoacrylate + NH4(+) + CO2. It catalyses the reaction (Z)-3-ureidoacrylate + H2O = (Z)-3-aminoacrylate + carbamate + H(+). The enzyme catalyses (Z)-2-methylureidoacrylate + H2O + H(+) = (Z)-2-methylaminoacrylate + NH4(+) + CO2. Its function is as follows. Hydrolyzes ureidoacrylate to form aminoacrylate and carbamate. The carbamate hydrolyzes spontaneously, thereby releasing one of the nitrogen atoms of the pyrimidine ring as ammonia and one of its carbon atoms as CO2. In Agrobacterium fabrum (strain C58 / ATCC 33970) (Agrobacterium tumefaciens (strain C58)), this protein is Ureidoacrylate amidohydrolase RutB.